A 705-amino-acid polypeptide reads, in one-letter code: Dolichyl-diphosphooligosaccharide--protein glycosyltransferase subunit STT3A (705 aa).

The Cytoplasmic segment spans residues 1-15 (MTKLGFLRLSYEKQD). A helical transmembrane segment spans residues 16–34 (TLLKLLILSMAAVLSFSTR). Over 35–111 (LFAVLRFESV…VLHFFHITID (77 aa)) the chain is Lumenal. A DXD motif 1 motif is present at residues 47-49 (EFD). Position 49 (D49) interacts with Mn(2+). The chain crosses the membrane as a helical span at residues 112–141 (IRNVCVFLAPLFSSFTTIVTYHLTKELKDA). A topological domain (cytoplasmic) is located at residue G142. The chain crosses the membrane as a helical span at residues 143 to 158 (AGLLAAAMIAVVPGYI). The Lumenal portion of the chain corresponds to 159–170 (SRSVAGSYDNEG). Mn(2+) contacts are provided by D167 and E169. A DXD motif 2 motif is present at residues 167–169 (DNE). A helical transmembrane segment spans residues 171-188 (IAIFCMLLTYYMWIKAVK). Residues 189–191 (TGS) lie on the Cytoplasmic side of the membrane. Residues 192 to 207 (IYWAAKCALAYFYMVS) form a helical membrane-spanning segment. Topologically, residues 208–210 (SWG) are lumenal. The helical transmembrane segment at 211 to 229 (GYVFLINLIPLHVLVLMLT) threads the bilayer. The Cytoplasmic portion of the chain corresponds to 230-234 (GRFSH). The helical transmembrane segment at 235–253 (RIYVAYCTVYCLGTILSMQ) threads the bilayer. Residues 254-265 (ISFVGFQPVLSS) lie on the Lumenal side of the membrane. The helical transmembrane segment at 266 to 283 (EHMAAFGVFGLCQIHAFV) threads the bilayer. The Cytoplasmic portion of the chain corresponds to 284 to 298 (DYLRSKLNPQQFEVL). A helical membrane pass occupies residues 299–317 (FRSVISLVGFVLLTVGALL). The Lumenal portion of the chain corresponds to 318–356 (MLTGKISPWTGRFYSLLDPSYAKNNIPIIASVSEHQPTT). The SVSE motif motif lies at 348-351 (SVSE). A helical transmembrane segment spans residues 357–379 (WSSYYFDLQLLVFMFPVGLYYCF). Residues 380–385 (SNLSDA) lie on the Cytoplasmic side of the membrane. Residues 386–402 (RIFIIMYGVTSMYFSAV) form a helical membrane-spanning segment. At 403–406 (MVRL) the chain is on the lumenal side. Position 405 (R405) interacts with dolichyl diphosphooligosaccharide. The helical transmembrane segment at 407–428 (MLVLAPVMCILSGIGVSQVLST) threads the bilayer. At 429–453 (YMKNLDISRPDKKSKKQQDSTYPIK) the chain is on the cytoplasmic side. Residues 454–473 (NEVASGMILVMAFFLITYTF) traverse the membrane as a helical segment. Residues 474–705 (HSTWVTSEAY…DLDNRGLSRT (232 aa)) are Lumenal-facing. Residues 525-527 (WWD) are interacts with target acceptor peptide in protein substrate. The WWDYG motif motif lies at 525-529 (WWDYG). Residue Y530 coordinates dolichyl diphosphooligosaccharide. Residues N537 and N544 are each glycosylated (N-linked (GlcNAc...) asparagine). N-linked (GlcNAc...) (high mannose) asparagine glycosylation occurs at N548. The short motif at 592-599 (DINKFLWM) is the DK motif element.

Belongs to the STT3 family. As to quaternary structure, component of the oligosaccharyltransferase (OST) complex. There are 2 OST complexes, OST-A and OST-B, which contain STT3A or STT3B as catalytic subunit, respectively. OST-A and OST-B contain common core subunits RPN1, RPN2, OST48, OST4, DAD1 and TMEM258, and OST-A contains DC2/OSTC and KRTCAP2/KCP2 specific accessory subunits. OST-A complex assembly occurs through the formation of 3 subcomplexes. Subcomplex 1 contains RPN1 and TMEM258, subcomplex 2 contains the OST-A-specific subunits STT3A, DC2/OSTC, and KCP2 as well as the core subunit OST4, and subcomplex 3 contains RPN2, DAD1, and OST48. The OST-A complex can form stable complexes with the Sec61 complex or with both the Sec61 and TRAP complexes. Mg(2+) serves as cofactor. The cofactor is Mn(2+).

The protein resides in the endoplasmic reticulum membrane. The enzyme catalyses a di-trans,poly-cis-dolichyl diphosphooligosaccharide + L-asparaginyl-[protein] = N(4)-(oligosaccharide-(1-&gt;4)-N-acetyl-beta-D-glucosaminyl-(1-&gt;4)-N-acetyl-beta-D-glucosaminyl)-L-asparaginyl-[protein] + a di-trans,poly-cis-dolichyl diphosphate + H(+). Its pathway is protein modification; protein glycosylation. In terms of biological role, catalytic subunit of the oligosaccharyl transferase (OST) complex that catalyzes the initial transfer of a defined glycan (Glc(3)Man(9)GlcNAc(2) in eukaryotes) from the lipid carrier dolichol-pyrophosphate to an asparagine residue within an Asn-X-Ser/Thr consensus motif in nascent polypeptide chains, the first step in protein N-glycosylation. N-glycosylation occurs cotranslationally and the complex associates with the Sec61 complex at the channel-forming translocon complex that mediates protein translocation across the endoplasmic reticulum (ER). All subunits are required for a maximal enzyme activity. This subunit contains the active site and the acceptor peptide and donor lipid-linked oligosaccharide (LLO) binding pockets. STT3A is present in the majority of OST complexes and mediates cotranslational N-glycosylation of most sites on target proteins, while STT3B-containing complexes are required for efficient post-translational glycosylation and mediate glycosylation of sites that have been skipped by STT3A. STT3A-containing OST-A complex is also required to prevent hyperglycosylation of some target proteins by preventing glycosylation of facultative sites before folding of target proteins is completed. The chain is Dolichyl-diphosphooligosaccharide--protein glycosyltransferase subunit STT3A from Canis lupus familiaris (Dog).